The sequence spans 362 residues: 3-dehydroquinate synthase (362 aa).

NAD(+)-binding positions include 71–76, 105–109, 129–130, K142, K151, and 169–172; these read DGEQYK, GVIGD, TT, and CLST. Zn(2+) contacts are provided by E184, H247, and H264.

This sequence belongs to the sugar phosphate cyclases superfamily. Dehydroquinate synthase family. It depends on Co(2+) as a cofactor. The cofactor is Zn(2+). NAD(+) is required as a cofactor.

The protein resides in the cytoplasm. The catalysed reaction is 7-phospho-2-dehydro-3-deoxy-D-arabino-heptonate = 3-dehydroquinate + phosphate. Its pathway is metabolic intermediate biosynthesis; chorismate biosynthesis; chorismate from D-erythrose 4-phosphate and phosphoenolpyruvate: step 2/7. Catalyzes the conversion of 3-deoxy-D-arabino-heptulosonate 7-phosphate (DAHP) to dehydroquinate (DHQ). The chain is 3-dehydroquinate synthase from Vibrio atlanticus (strain LGP32) (Vibrio splendidus (strain Mel32)).